A 2493-amino-acid chain; its full sequence is Adenylate cyclase (2493 aa).

Polar residues-rich tracts occupy residues M1–Q18, R42–T51, S60–I78, P129–P147, and A197–N210. 9 disordered regions span residues M1–L85, F99–S148, A197–S325, N355–S444, G475–L565, Q616–Y660, N753–S832, A854–A882, and R904–T967. The segment covering P211–T233 has biased composition (low complexity). 2 stretches are compositionally biased toward polar residues: residues N234 to G246 and L253 to P264. Composition is skewed to basic residues over residues A287 to S303 and H404 to K422. The segment covering K425 to R434 has biased composition (basic and acidic residues). Residues P500 to S525 show a composition bias toward polar residues. The span at S534–S555 shows a compositional bias: low complexity. A compositionally biased stretch (basic and acidic residues) spans T630–S640. Residues V641–Y660 are compositionally biased toward polar residues. Over residues V754 to D763 the composition is skewed to acidic residues. Composition is skewed to low complexity over residues S780–S791 and A854–P870. Residues R913–S935 show a composition bias toward polar residues. Positions R970 to V1072 constitute a Ras-associating domain. 22 LRR repeats span residues T1086–H1107, W1110–C1132, S1134–S1155, T1157–L1178, E1181–I1202, T1204–V1225, S1227–L1248, N1250–L1271, S1273–P1294, R1295–Q1316, L1317–T1336, D1339–Q1360, A1363–K1385, R1386–L1407, A1409–C1430, S1432–R1453, S1511–T1534, S1535–T1556, K1559–V1580, E1583–K1605, K1606–W1628, and E1635–S1654. One can recognise a PPM-type phosphatase domain in the interval A1710 to V2000. In terms of domain architecture, Guanylate cyclase spans A2058–S2194. D2063 and D2105 together coordinate Mg(2+). Disordered regions lie at residues D2220–E2241, E2354–A2378, and P2467–P2493. Residues A2470 to R2485 are compositionally biased toward polar residues.

Belongs to the adenylyl cyclase class-3 family. The cofactor is Mg(2+).

The enzyme catalyses ATP = 3',5'-cyclic AMP + diphosphate. Functionally, plays essential roles in regulation of cellular metabolism by catalyzing the synthesis of a second messenger, cAMP. The sequence is that of Adenylate cyclase (UAC1) from Mycosarcoma maydis (Corn smut fungus).